The sequence spans 290 residues: 4-diphosphocytidyl-2-C-methyl-D-erythritol kinase (290 aa).

Residue Lys-11 is part of the active site. An ATP-binding site is contributed by 97–107 (PVAAGIGGGSS). Residue Asp-139 is part of the active site.

This sequence belongs to the GHMP kinase family. IspE subfamily.

The catalysed reaction is 4-CDP-2-C-methyl-D-erythritol + ATP = 4-CDP-2-C-methyl-D-erythritol 2-phosphate + ADP + H(+). Its pathway is isoprenoid biosynthesis; isopentenyl diphosphate biosynthesis via DXP pathway; isopentenyl diphosphate from 1-deoxy-D-xylulose 5-phosphate: step 3/6. Its function is as follows. Catalyzes the phosphorylation of the position 2 hydroxy group of 4-diphosphocytidyl-2C-methyl-D-erythritol. The polypeptide is 4-diphosphocytidyl-2-C-methyl-D-erythritol kinase (Methylobacterium radiotolerans (strain ATCC 27329 / DSM 1819 / JCM 2831 / NBRC 15690 / NCIMB 10815 / 0-1)).